Here is a 348-residue protein sequence, read N- to C-terminus: Trans-L-3-hydroxyproline dehydratase (348 aa).

Cysteine 101 acts as the Proton acceptor in catalysis. Substrate-binding positions include 102–103, aspartate 263, and 268–269; these read GH and GS.

This sequence belongs to the proline racemase family. In terms of assembly, homodimer.

It catalyses the reaction trans-3-hydroxy-L-proline = 1-pyrroline-2-carboxylate + H2O. Its function is as follows. Catalyzes the dehydration of trans-3-hydroxy-L-proline to delta-1-pyrroline-2-carboxylate (Pyr2C). This chain is Trans-L-3-hydroxyproline dehydratase (l3hypdh), found in Xenopus tropicalis (Western clawed frog).